The following is a 124-amino-acid chain: ATP synthase subunit H, mitochondrial (124 aa).

The transit peptide at 1–32 (MFPIASRRILLNASVLPLRLCNRNFTTTRISY) directs the protein to the mitochondrion. The segment at 89 to 124 (NVETAHVAKESEEGESEPIEEDWLVLDDAEETKESH) is disordered. The span at 100-124 (EEGESEPIEEDWLVLDDAEETKESH) shows a compositional bias: acidic residues.

Belongs to the ATPase h subunit family. As to quaternary structure, F-type ATPases have 2 components, CF(1) - the catalytic core - and CF(0) - the membrane proton channel. In yeast, the dimeric form of ATP synthase consists of 17 polypeptides: alpha, beta, gamma, delta, epsilon, 4 (B), 5 (OSCP), 6 (A), 8, 9 (C), d, E (Tim11), f, g, h, i/j and k.

The protein localises to the mitochondrion. It is found in the mitochondrion inner membrane. Mitochondrial membrane ATP synthase (F(1)F(0) ATP synthase or Complex V) produces ATP from ADP in the presence of a proton gradient across the membrane which is generated by electron transport complexes of the respiratory chain. F-type ATPases consist of two structural domains, F(1) - containing the extramembraneous catalytic core and F(0) - containing the membrane proton channel, linked together by a central stalk and a peripheral stalk. During catalysis, ATP synthesis in the catalytic domain of F(1) is coupled via a rotary mechanism of the central stalk subunits to proton translocation. Part of the complex F(0) domain. Minor subunit located with subunit a in the membrane. The chain is ATP synthase subunit H, mitochondrial (ATP14) from Saccharomyces cerevisiae (strain ATCC 204508 / S288c) (Baker's yeast).